The primary structure comprises 92 residues: Putative protein IntG (92 aa).

The protein belongs to the 'phage' integrase family.

This is Putative protein IntG (intG) from Escherichia coli (strain K12).